The primary structure comprises 165 residues: 3-isopropylmalate dehydratase small subunit 2 (165 aa).

It belongs to the LeuD family. LeuD type 2 subfamily. Heterodimer of LeuC and LeuD.

The catalysed reaction is (2R,3S)-3-isopropylmalate = (2S)-2-isopropylmalate. Its pathway is amino-acid biosynthesis; L-leucine biosynthesis; L-leucine from 3-methyl-2-oxobutanoate: step 2/4. Its function is as follows. Catalyzes the isomerization between 2-isopropylmalate and 3-isopropylmalate, via the formation of 2-isopropylmaleate. This is 3-isopropylmalate dehydratase small subunit 2 (leuD2) from Archaeoglobus fulgidus (strain ATCC 49558 / DSM 4304 / JCM 9628 / NBRC 100126 / VC-16).